The sequence spans 202 residues: Holliday junction resolvase RecU (202 aa).

Mg(2+)-binding residues include Thr-85, Asp-87, Glu-100, and Gln-119.

Belongs to the RecU family. It depends on Mg(2+) as a cofactor.

Its subcellular location is the cytoplasm. The enzyme catalyses Endonucleolytic cleavage at a junction such as a reciprocal single-stranded crossover between two homologous DNA duplexes (Holliday junction).. In terms of biological role, endonuclease that resolves Holliday junction intermediates in genetic recombination. Cleaves mobile four-strand junctions by introducing symmetrical nicks in paired strands. Promotes annealing of linear ssDNA with homologous dsDNA. Required for DNA repair, homologous recombination and chromosome segregation. The polypeptide is Holliday junction resolvase RecU (Streptococcus pyogenes serotype M5 (strain Manfredo)).